The sequence spans 1134 residues: Mediator of RNA polymerase II transcription subunit 12 (1134 aa).

It belongs to the Mediator complex subunit 12 family. As to quaternary structure, component of the srb8-11 complex which consists of rb8, srb9(TRAP240), srb10 and srb11. The srb8-11 complex associates with the Mediator complex thereby blocking association with RNA polymerase II and leading to reduced transcriptional activation by Mediator.

It localises to the nucleus. Component of the srb8-11 complex. The srb8-11 complex is a regulatory module of the Mediator complex which is itself involved in regulation of basal and activated RNA polymerase II-dependent transcription. The srb8-11 complex may be involved in the transcriptional repression of a subset of genes regulated by Mediator. It may inhibit the association of the Mediator complex with RNA polymerase II to form the holoenzyme complex. This is Mediator of RNA polymerase II transcription subunit 12 (srb8) from Schizosaccharomyces pombe (strain 972 / ATCC 24843) (Fission yeast).